The primary structure comprises 216 residues: MSSEPFKNVYLLPQTNQLLGLYTIIRNKNTTRPDFIFYSDRIIRLLVEEGLNHLPVQKQIVETDTNENFEGVSFMGKICGVSIVRAGESMEQGLRDCCRSVRIGKILIQRDEETALPKLFYEKLPEDISERYVFLLDPMLATGGSAIMATEVLIKRGVKPERIYFLNLICSKEGIEKYHAAFPEVRIVTGALDRGLDENKYLVPGLGDFGDRYYCV.

GTP contacts are provided by residues R32, R41, 75 to 78, and K77; that span reads MGKI. S82 bears the Phosphoserine mark. R85 is a 5-phospho-alpha-D-ribose 1-diphosphate binding site. GTP is bound at residue R102. R110 serves as a coordination point for 5-phospho-alpha-D-ribose 1-diphosphate. R131 serves as a coordination point for GTP. Residues D137 and 137 to 145 each bind 5-phospho-alpha-D-ribose 1-diphosphate; that span reads DPMLATGGS. Y201 is a binding site for D-ribose 5-phosphate. Uracil is bound by residues L202 and 207–209; that span reads GDF. D208 is a 5-phospho-alpha-D-ribose 1-diphosphate binding site.

Belongs to the UPRTase family. Mg(2+) is required as a cofactor.

The enzyme catalyses UMP + diphosphate = 5-phospho-alpha-D-ribose 1-diphosphate + uracil. It functions in the pathway pyrimidine metabolism; UMP biosynthesis via salvage pathway; UMP from uracil: step 1/1. With respect to regulation, allosterically activated by GTP. In terms of biological role, catalyzes the conversion of uracil and 5-phospho-alpha-D-ribose 1-diphosphate (PRPP) to UMP and diphosphate in the pyrimidine salvage pathway. The protein is Uracil phosphoribosyltransferase (FUR1) of Saccharomyces cerevisiae (strain ATCC 204508 / S288c) (Baker's yeast).